A 416-amino-acid chain; its full sequence is Tryptophan synthase beta chain (416 aa).

At lysine 109 the chain carries N6-(pyridoxal phosphate)lysine.

The protein belongs to the TrpB family. In terms of assembly, tetramer of two alpha and two beta chains. Requires pyridoxal 5'-phosphate as cofactor.

It carries out the reaction (1S,2R)-1-C-(indol-3-yl)glycerol 3-phosphate + L-serine = D-glyceraldehyde 3-phosphate + L-tryptophan + H2O. It functions in the pathway amino-acid biosynthesis; L-tryptophan biosynthesis; L-tryptophan from chorismate: step 5/5. The beta subunit is responsible for the synthesis of L-tryptophan from indole and L-serine. The polypeptide is Tryptophan synthase beta chain (Mesorhizobium japonicum (strain LMG 29417 / CECT 9101 / MAFF 303099) (Mesorhizobium loti (strain MAFF 303099))).